The following is a 276-amino-acid chain: Alpha N-terminal protein methyltransferase 1 (276 aa).

Residues Gly-96, Arg-101, 118-120 (EPV), 149-150 (LQ), and Gln-165 contribute to the S-adenosyl-L-methionine site.

The protein belongs to the methyltransferase superfamily. NTM1 family.

It carries out the reaction N-terminal L-alanyl-L-prolyl-L-lysyl-[protein] + 3 S-adenosyl-L-methionine = N-terminal N,N,N-trimethyl-L-alanyl-L-prolyl-L-lysyl-[protein] + 3 S-adenosyl-L-homocysteine + 3 H(+). The catalysed reaction is N-terminal L-seryl-L-prolyl-L-lysyl-[protein] + 3 S-adenosyl-L-methionine = N-terminal N,N,N-trimethyl-L-seryl-L-prolyl-L-lysyl-[protein] + 3 S-adenosyl-L-homocysteine + 3 H(+). It catalyses the reaction N-terminal L-prolyl-L-prolyl-L-lysyl-[protein] + 2 S-adenosyl-L-methionine = N-terminal N,N-dimethyl-L-prolyl-L-prolyl-L-lysyl-[protein] + 2 S-adenosyl-L-homocysteine + 2 H(+). Its function is as follows. Alpha-N-methyltransferase that methylates the N-terminus of target proteins containing the N-terminal motif [Ala/Pro/Ser]-Pro-Lys when the initiator Met is cleaved. Specifically catalyzes mono-, di- or tri-methylation of exposed alpha-amino group of Ala or Ser residue in the [Ala/Ser]-Pro-Lys motif and mono- or di-methylation of Pro in the Pro-Pro-Lys motif. In Arabidopsis thaliana (Mouse-ear cress), this protein is Alpha N-terminal protein methyltransferase 1.